The primary structure comprises 302 residues: Endochitinase 2 (302 aa).

Residues E1–G42 form the Chitin-binding type-1 domain. Intrachain disulfides connect C3/C18, C12/C24, C17/C31, C36/C40, C73/C136, C148/C156, and C255/C287. E117 (proton donor) is an active-site residue. Residues G296–M302 constitute a propeptide, removed in mature form.

It belongs to the glycosyl hydrolase 19 family. Chitinase class I subfamily.

The enzyme catalyses Random endo-hydrolysis of N-acetyl-beta-D-glucosaminide (1-&gt;4)-beta-linkages in chitin and chitodextrins.. Defense against chitin-containing fungal pathogens. The sequence is that of Endochitinase 2 from Gossypium hirsutum (Upland cotton).